Reading from the N-terminus, the 524-residue chain is Beta-glucosidase 22 (524 aa).

The N-terminal stretch at 1–24 (MALQKFPLLGLLFLITIVVSSTIA) is a signal peptide. A beta-D-glucoside is bound at residue glutamine 55. Residue asparagine 61 is glycosylated (N-linked (GlcNAc...) asparagine). A beta-D-glucoside-binding positions include histidine 158 and 203–204 (NE). Glutamate 204 acts as the Proton donor in catalysis. A disulfide bridge links cysteine 223 with cysteine 230. A beta-D-glucoside-binding positions include tyrosine 346, glutamate 418, tryptophan 468, 475 to 476 (EW), and phenylalanine 484. Glutamate 418 (nucleophile) is an active-site residue. An N-linked (GlcNAc...) asparagine glycan is attached at asparagine 494. The Prevents secretion from ER motif lies at 521-524 (KDEL).

Belongs to the glycosyl hydrolase 1 family. Component of the PYK10 complex, at least composed of PYK10/BGLU23, BGLU21, BGLU22, JAL22, JAL23, PBP1/JAL30, PBP2/JAL31, JAL32, JAL33, JAL34, JAL35, GLL22 and GLL23. As to expression, expressed exclusively in roots.

Its subcellular location is the endoplasmic reticulum lumen. It catalyses the reaction Hydrolysis of terminal, non-reducing beta-D-glucosyl residues with release of beta-D-glucose.. Activated upon binding to PBP1 or PBP2. Beta-D-glucosidase active on scopolin &gt;&gt; esculin &gt;&gt; 4-MU-glucoside. No activity with DIMBOA-glucoside, pNP-glucoside, oNP-glucoside and sinigrin as substrates. This Arabidopsis thaliana (Mouse-ear cress) protein is Beta-glucosidase 22.